We begin with the raw amino-acid sequence, 354 residues long: Fructose-bisphosphate aldolase (354 aa).

Ser-50 lines the D-glyceraldehyde 3-phosphate pocket. Asp-83 serves as the catalytic Proton donor. The Zn(2+) site is built by His-84, Asp-105, Glu-142, and His-198. Gly-199 provides a ligand contact to dihydroxyacetone phosphate. Zn(2+) is bound at residue His-232. Dihydroxyacetone phosphate-binding positions include 233–235 and 275–278; these read GSS and NIDT.

It belongs to the class II fructose-bisphosphate aldolase family. Zn(2+) serves as cofactor.

The catalysed reaction is beta-D-fructose 1,6-bisphosphate = D-glyceraldehyde 3-phosphate + dihydroxyacetone phosphate. It participates in carbohydrate degradation; glycolysis; D-glyceraldehyde 3-phosphate and glycerone phosphate from D-glucose: step 4/4. Functionally, catalyzes the aldol condensation of dihydroxyacetone phosphate (DHAP or glycerone-phosphate) with glyceraldehyde 3-phosphate (G3P) to form fructose 1,6-bisphosphate (FBP) in gluconeogenesis and the reverse reaction in glycolysis. The polypeptide is Fructose-bisphosphate aldolase (fba) (Stutzerimonas stutzeri (Pseudomonas stutzeri)).